Here is a 784-residue protein sequence, read N- to C-terminus: Alpha-catulin (784 aa).

A vinculin/alpha-catenin homology 1 (VH1) region region spans residues 35-247; that stretch reads IKTKSIEQTL…LLLTASKTYL (213 aa). Residues 387–414 are a coiled coil; sequence ASGLEVTVERLNRRLKDLSKQLQIVAME. The segment at 552-696 is vinculin/alpha-catenin homology 2 (VH2) region; that stretch reads PRPGKHGTTQ…MVKSPTVGKT (145 aa). The segment at 737–784 is disordered; it reads GSVNGRTGADGERTSRESTVWRRTPSIRRAAPPTSSHLSANNSSSIHI. Basic and acidic residues predominate over residues 745 to 756; sequence ADGERTSRESTV. The span at 771–784 shows a compositional bias: low complexity; sequence SSHLSANNSSSIHI.

It belongs to the vinculin/alpha-catenin family. Interacts with slo-1 (via C-terminus); the interaction is required for localization of slo-1 to dense bodies in body wall muscle cells. Interacts (via N-terminus) with dystrophin complex member dyb-1 (via C-terminus); the interaction is required for localization of the dystrophin complex and ctn-1 near dense bodies in muscle cells. In terms of tissue distribution, expressed in body wall muscles, vulval muscles, stomatointestinal cells and pharyngeal muscle cells. Expressed in enteric muscles, nerve ring neurons and in the ventral nerve cord.

The protein localises to the cytoplasm. In terms of biological role, required for slo-1 potassium ion channel clustering at presynaptic terminals and in egg-laying muscles; clustering of slo-1 mediates the intoxicating and sedatory effects of ethanol on worms. Required for slo-1 localization to dense bodies in body wall muscle cells. Maintains the localization of the dystrophin complex near muscle cell dense bodies via its interaction with complex member dyb-1 which is required for slo-1 localization in muscle while slo-1 localization in neurons is independent of the dystrophin complex. The protein is Alpha-catulin of Caenorhabditis elegans.